Here is a 31-residue protein sequence, read N- to C-terminus: Cytochrome b6-f complex subunit 6 (31 aa).

Residues 4-24 form a helical membrane-spanning segment; sequence ITSYFGFLLAALTITSALFIG.

It belongs to the PetL family. As to quaternary structure, the 4 large subunits of the cytochrome b6-f complex are cytochrome b6, subunit IV (17 kDa polypeptide, PetD), cytochrome f and the Rieske protein, while the 4 small subunits are PetG, PetL, PetM and PetN. The complex functions as a dimer.

Its subcellular location is the plastid. It localises to the chloroplast thylakoid membrane. Functionally, component of the cytochrome b6-f complex, which mediates electron transfer between photosystem II (PSII) and photosystem I (PSI), cyclic electron flow around PSI, and state transitions. PetL is important for photoautotrophic growth as well as for electron transfer efficiency and stability of the cytochrome b6-f complex. This chain is Cytochrome b6-f complex subunit 6, found in Gossypium hirsutum (Upland cotton).